We begin with the raw amino-acid sequence, 748 residues long: Protein REPRESSOR OF SILENCING 3 (748 aa).

Residues 10–86 enclose the RRM domain; it reads VRLHVGGLGE…GRLRLEKAKE (77 aa). 4 disordered regions span residues 244–318, 350–531, 579–600, and 729–748; these read KSIL…QSID, GSSK…VSDT, VDEE…GGSS, and EWAK…NSEE. Residues 266–288 show a composition bias toward polar residues; it reads THPSKNRQTISLEETGRQESSQA. A compositionally biased stretch (basic and acidic residues) spans 294-314; it reads KPSEVVPDKSSDEPSRTKDLE. Over residues 373-382 the composition is skewed to basic residues; the sequence is LKKKTKRKRV. Acidic residues-rich tracts occupy residues 403 to 416, 439 to 472, and 491 to 518; these read DTMA…DSDA, DDSD…DAVE, and ESDD…DVGS. Residues 520 to 531 show a composition bias toward polar residues; sequence DSGSLADTVSDT.

Ubiquitously expressed.

Its subcellular location is the nucleus. It is found in the nucleolus. It localises to the nucleoplasm. Functionally, RNA-binding protein required for DNA demethylation and to eluviate siRNA-mediated transcriptional gene silencing (TGS), probably by guiding ROS1. Can bind specifically single stranded G-rich RNAs of 21-, 24- or 26-nt corresponding to promoter sequence of target genes; this interaction directs demethylation of target sequences. This chain is Protein REPRESSOR OF SILENCING 3, found in Arabidopsis thaliana (Mouse-ear cress).